The primary structure comprises 285 residues: UPF0603 protein At1g54780, chloroplastic (285 aa).

2 disordered regions span residues methionine 1–arginine 48 and glycine 228–glutamate 251. Over residues histidine 22–serine 40 the composition is skewed to polar residues. Positions lysine 238–glutamate 251 are enriched in basic and acidic residues. The helical transmembrane segment at phenylalanine 259–phenylalanine 279 threads the bilayer.

It belongs to the UPF0603 family.

The protein resides in the plastid. It localises to the chloroplast thylakoid membrane. The sequence is that of UPF0603 protein At1g54780, chloroplastic from Arabidopsis thaliana (Mouse-ear cress).